A 1318-amino-acid chain; its full sequence is Meiotically up-regulated gene 79 protein (1318 aa).

Disordered stretches follow at residues 177–198, 208–227, and 360–387; these read PVNS…SGSY, EEEL…IVVT, and PQAL…PPKG. Residues 364 to 384 are compositionally biased toward low complexity; it reads AAAESPTTKAPTTKAPTSEAP. The 110-residue stretch at 1049–1158 folds into the PH domain; it reads MISYKKMVLS…WIHSLNFNAA (110 aa).

It is found in the nucleus. Functionally, appears to have a role in sporulation. In Schizosaccharomyces pombe (strain 972 / ATCC 24843) (Fission yeast), this protein is Meiotically up-regulated gene 79 protein (mug79).